Here is a 199-residue protein sequence, read N- to C-terminus: Recombination protein RecR (199 aa).

A C4-type zinc finger spans residues 57-72 (CQSCRTFTEETYCPIC). Positions 81–176 (DIICVVETPA…MVSRIAHGVP (96 aa)) constitute a Toprim domain.

Belongs to the RecR family.

In terms of biological role, may play a role in DNA repair. It seems to be involved in an RecBC-independent recombinational process of DNA repair. It may act with RecF and RecO. The protein is Recombination protein RecR of Shewanella halifaxensis (strain HAW-EB4).